The sequence spans 199 residues: Probable nicotinate-nucleotide adenylyltransferase (199 aa).

The protein belongs to the NadD family.

The enzyme catalyses nicotinate beta-D-ribonucleotide + ATP + H(+) = deamido-NAD(+) + diphosphate. It participates in cofactor biosynthesis; NAD(+) biosynthesis; deamido-NAD(+) from nicotinate D-ribonucleotide: step 1/1. Functionally, catalyzes the reversible adenylation of nicotinate mononucleotide (NaMN) to nicotinic acid adenine dinucleotide (NaAD). The chain is Probable nicotinate-nucleotide adenylyltransferase from Roseiflexus sp. (strain RS-1).